Reading from the N-terminus, the 48-residue chain is Disintegrin accutin (48 aa).

A Pyrrolidone carboxylic acid modification is found at glutamine 1. The region spanning 1–48 (QGAQCTAGPCCWPCKFLKEGTICRRARGDDLDDYCNGISADCPRNPYY) is the Disintegrin domain. Cystine bridges form between cysteine 5–cysteine 11, cysteine 10–cysteine 35, and cysteine 23–cysteine 42. The Cell attachment site motif lies at 27–29 (RGD).

The protein belongs to the venom metalloproteinase (M12B) family. P-II subfamily. P-IIa sub-subfamily. Monomer (disintegrin). As to expression, expressed by the venom gland.

The protein resides in the secreted. In terms of biological role, inhibit human platelet aggregation induced by ADP, collagen, thrombin or the thromboxane analog U46619 in platelet suspension with IC(50) values of 66-267 nM. Acts by inhibiting fibrinogen interaction with platelet receptors GPIIb/GPIIIa (ITGA2B/ITGB3). It also inhibits angiogenesis in vivo and in vitro by blocking integrin alpha-V/beta-3 (ITGAV/ITGB3) of endothelial cells and by inducing apoptosis. This chain is Disintegrin accutin, found in Deinagkistrodon acutus (Hundred-pace snake).